Reading from the N-terminus, the 518-residue chain is Dihydro-ML-236C monooxygenase mlcC (518 aa).

The Cytoplasmic portion of the chain corresponds to 1–31 (MLGQVLLTVESYQWVSTPQALVAVAVLLSLI). Residues 32–48 (AYRLRGRQSELQVYNPK) form a helical; Signal-anchor for type II membrane protein membrane-spanning segment. The Lumenal portion of the chain corresponds to 49–518 (KWWELTTMRA…EDIPLPHDRC (470 aa)). Cys454 serves as a coordination point for heme.

Belongs to the cytochrome P450 family. It depends on heme as a cofactor.

It localises to the endoplasmic reticulum membrane. It carries out the reaction dihydro-ML-236C carboxylate + reduced [NADPH--hemoprotein reductase] + O2 = ML-236C carboxylate + oxidized [NADPH--hemoprotein reductase] + 2 H2O + H(+). It catalyses the reaction ML-236C carboxylate + reduced [NADPH--hemoprotein reductase] + O2 = ML-236A carboxylate + oxidized [NADPH--hemoprotein reductase] + H2O + H(+). It participates in polyketide biosynthesis. Functionally, dihydro-ML-236C carboxylate monooxygenase; part of the gene cluster that mediates the biosynthesis of compactin, also known as mevastatin or ML-236B, and which acts as a potent competitive inhibitor of HMG-CoA reductase. Compactin biosynthesis is performed in two stages. The first stage is catalyzed by the nonaketide synthase mlcA, which belongs to type I polyketide synthases and catalyzes the iterative nine-step formation of the polyketide. This PKS stage is completed by the action of dehydrogenase mlcG, which catalyzes the NADPH-dependent reduction of the unsaturated tetra-, penta- and heptaketide intermediates that arise during the mlcA-mediated biosynthesis of the nonaketide chain and leads to dihydro-ML-236C carboxylate. Covalently bound dihydro-ML-236C carboxylate is released from mlcA by the mlcF esterase. Conversion of dihydro-ML-236C carboxylate into ML-236A carboxylate is subsequently performed with the participation of molecular oxygen and P450 monoogygenase mlcC. Finally, mlcH performs the conversion of ML-236A carboxylate to ML-236B/compactin carboxylate through the addition of the side-chain diketide moiety produced by the diketide synthase mlcB. The polypeptide is Dihydro-ML-236C monooxygenase mlcC (Penicillium citrinum).